A 21-amino-acid chain; its full sequence is Peptide PGLa-R4 (21 aa).

Leucine amide is present on Leu-21.

As to expression, expressed by the skin glands.

The protein localises to the secreted. Antimicrobial peptide. The chain is Peptide PGLa-R4 from Xenopus ruwenzoriensis (Uganda clawed frog).